Consider the following 661-residue polypeptide: Altered inheritance of mitochondria protein 3-1 (661 aa).

Disordered regions lie at residues 19 to 99 (TKTV…YSGY), 116 to 142 (AQNT…SQYN), 154 to 194 (QPAG…TFQS), 263 to 419 (LPQQ…DSSS), 431 to 473 (RNIP…SPGI), 487 to 563 (YAGH…RKDN), and 615 to 661 (EAAT…FVHS). A compositionally biased stretch (basic and acidic residues) spans 37–58 (KDKDTHHTDHHEEDEYSEDYHT). Low complexity predominate over residues 120-142 (PYSSPAQQQPVSPQPPVQNSQYN). Low complexity predominate over residues 263 to 318 (LPQQQQQQQQQPEYNTQLQQNQQLHNQQAYGQQQQIYSNNTQPQYVSQTQQTSYTQ). Polar residues-rich tracts occupy residues 319 to 328 (NAPPQQTRSP) and 356 to 371 (VNQT…NEAL). Residues 390–399 (THRDRGRASV) are compositionally biased toward basic and acidic residues. Polar residues predominate over residues 406–419 (ENMQTNNSTIDSSS). Residues 434 to 447 (PAPAVGPPGAATRA) are compositionally biased toward low complexity. Composition is skewed to polar residues over residues 458–473 (SQSM…SPGI), 512–533 (RSTS…PSRD), and 541–552 (RSTVSSIQSSNR).

It belongs to the AIM3 family.

Its subcellular location is the membrane raft. This chain is Altered inheritance of mitochondria protein 3-1 (AIM3-1), found in Candida glabrata (strain ATCC 2001 / BCRC 20586 / JCM 3761 / NBRC 0622 / NRRL Y-65 / CBS 138) (Yeast).